We begin with the raw amino-acid sequence, 238 residues long: Chromosome partition protein MukE (238 aa).

Belongs to the MukE family. As to quaternary structure, interacts, and probably forms a ternary complex, with MukF and MukB. The complex formation is stimulated by calcium or magnesium.

It is found in the cytoplasm. It localises to the nucleoid. In terms of biological role, involved in chromosome condensation, segregation and cell cycle progression. May participate in facilitating chromosome segregation by condensation DNA from both sides of a centrally located replisome during cell division. Probably acts via its interaction with MukB and MukF. The polypeptide is Chromosome partition protein MukE (Haemophilus ducreyi (strain 35000HP / ATCC 700724)).